A 250-amino-acid chain; its full sequence is Imidazole glycerol phosphate synthase subunit HisF (250 aa).

Active-site residues include Asp11 and Asp130.

It belongs to the HisA/HisF family. As to quaternary structure, heterodimer of HisH and HisF.

Its subcellular location is the cytoplasm. The enzyme catalyses 5-[(5-phospho-1-deoxy-D-ribulos-1-ylimino)methylamino]-1-(5-phospho-beta-D-ribosyl)imidazole-4-carboxamide + L-glutamine = D-erythro-1-(imidazol-4-yl)glycerol 3-phosphate + 5-amino-1-(5-phospho-beta-D-ribosyl)imidazole-4-carboxamide + L-glutamate + H(+). It functions in the pathway amino-acid biosynthesis; L-histidine biosynthesis; L-histidine from 5-phospho-alpha-D-ribose 1-diphosphate: step 5/9. In terms of biological role, IGPS catalyzes the conversion of PRFAR and glutamine to IGP, AICAR and glutamate. The HisF subunit catalyzes the cyclization activity that produces IGP and AICAR from PRFAR using the ammonia provided by the HisH subunit. This is Imidazole glycerol phosphate synthase subunit HisF from Bacteroides fragilis (strain ATCC 25285 / DSM 2151 / CCUG 4856 / JCM 11019 / LMG 10263 / NCTC 9343 / Onslow / VPI 2553 / EN-2).